We begin with the raw amino-acid sequence, 318 residues long: MNYSWITIMSLLVICKLASAKVVLIGKNTILSFDDVEATFTPIVRNSGECGILYVAEPLEACSDITNMAEKRSKYRSSYVLIVLGGCSFEEKVRKAQKAGYKAAIVYNDGYDELLVPMAGNSSGVDIHGLLVTRASGEVLKGYADQDEMKLWLIPGFGISSWSIMGITFISLLAMSAILATCFVVRRHQIRQSVRDLPHGGQGLSCMPRDLLQSMPTEVYSGVLEESSTSVTCAICIDDYCVGEKLRILPCKHKYHAVCIDSWLGRCRSFCPVCKQNPRTGNDVPPASETTPLISPSPNSITSLQSFYDLPIVVRVYL.

Residues Met-1–Ala-20 form the signal peptide. Topologically, residues Val-22 to Ser-163 are lumenal. Cys-62 and Cys-87 are oxidised to a cystine. One can recognise a PA domain in the interval Glu-70–Tyr-143. Asn-121 carries N-linked (GlcNAc...) asparagine glycosylation. Residues Ile-164 to Val-184 traverse the membrane as a helical segment. The Cytoplasmic portion of the chain corresponds to Val-185–Leu-318. The RING-type; atypical zinc finger occupies Cys-233–Lys-275.

The protein resides in the prevacuolar compartment membrane. It localises to the protein storage vacuole membrane. In terms of biological role, involved in the trafficking of vacuolar proteins. May function as a sorting receptor for protein trafficking to the protein storage vacuole (PSV). This is Receptor homology region, transmembrane domain- and RING domain-containing protein 5 (RMR5) from Arabidopsis thaliana (Mouse-ear cress).